The primary structure comprises 67 residues: Surface composition regulator (67 aa).

The protein belongs to the GlgS family.

In terms of biological role, major determinant of cell surface composition. Negatively regulates motility, adhesion and synthesis of biofilm exopolysaccharides. This chain is Surface composition regulator, found in Salmonella paratyphi A (strain ATCC 9150 / SARB42).